The chain runs to 45 residues: MTFQILFLFVFHFVYIFRAHQYPAYFEDEKDTYIKIRIYSPRSIS.

The N-terminal stretch at 1-19 (MTFQILFLFVFHFVYIFRA) is a signal peptide.

This is an uncharacterized protein from Saccharomyces cerevisiae (strain ATCC 204508 / S288c) (Baker's yeast).